A 331-amino-acid polypeptide reads, in one-letter code: UDP-N-acetylenolpyruvoylglucosamine reductase (331 aa).

Positions 54–221 (RVGGAAELYV…TQATFQLQPG (168 aa)) constitute an FAD-binding PCMH-type domain. Arginine 200 is a catalytic residue. Serine 251 serves as the catalytic Proton donor. Residue glutamate 321 is part of the active site.

This sequence belongs to the MurB family. It depends on FAD as a cofactor.

It is found in the cytoplasm. It catalyses the reaction UDP-N-acetyl-alpha-D-muramate + NADP(+) = UDP-N-acetyl-3-O-(1-carboxyvinyl)-alpha-D-glucosamine + NADPH + H(+). It participates in cell wall biogenesis; peptidoglycan biosynthesis. In terms of biological role, cell wall formation. This is UDP-N-acetylenolpyruvoylglucosamine reductase from Nostoc sp. (strain PCC 7120 / SAG 25.82 / UTEX 2576).